A 285-amino-acid chain; its full sequence is MAVVTMKQLLDSGAHFGHQTRRWNPKMKRFIFTDRNGIYIIDLQQTLTYIDKAYEFVKETVAHGGTVLFVGTKKQAQESIAAEATRVGMPYVNQRWLGGMLTNFSTVHKRLQRLKELEAMEQTGGFEGRTKKEILMLTREMNKLERTLGGIRDMQKVPSAIWVVDTNKEHIAVGEARKLNIPVIAILDTNCDPDLVDYPIPGNDDAIRSAALLTKVVASAVAEGVQARAGLASGDAKPEAGAGEPLAEWEQELLAQANPNAEGSAEAAPAAATEEAPAAQTPADF.

The interval 229-285 (AGLASGDAKPEAGAGEPLAEWEQELLAQANPNAEGSAEAAPAAATEEAPAAQTPADF) is disordered. Positions 257 to 285 (ANPNAEGSAEAAPAAATEEAPAAQTPADF) are enriched in low complexity.

The protein belongs to the universal ribosomal protein uS2 family.

The sequence is that of Small ribosomal subunit protein uS2 from Nocardia farcinica (strain IFM 10152).